We begin with the raw amino-acid sequence, 309 residues long: 4-hydroxy-3-methylbut-2-enyl diphosphate reductase (309 aa).

Cys12 lines the [4Fe-4S] cluster pocket. Positions 41 and 74 each coordinate (2E)-4-hydroxy-3-methylbut-2-enyl diphosphate. His41 and His74 together coordinate dimethylallyl diphosphate. His41 and His74 together coordinate isopentenyl diphosphate. Residue Cys96 coordinates [4Fe-4S] cluster. His124 serves as a coordination point for (2E)-4-hydroxy-3-methylbut-2-enyl diphosphate. Residue His124 coordinates dimethylallyl diphosphate. His124 is an isopentenyl diphosphate binding site. Glu126 (proton donor) is an active-site residue. A (2E)-4-hydroxy-3-methylbut-2-enyl diphosphate-binding site is contributed by Thr167. [4Fe-4S] cluster is bound at residue Cys197. 4 residues coordinate (2E)-4-hydroxy-3-methylbut-2-enyl diphosphate: Ser225, Ser226, Asn227, and Ser269. Dimethylallyl diphosphate is bound by residues Ser225, Ser226, Asn227, and Ser269. Isopentenyl diphosphate-binding residues include Ser225, Ser226, Asn227, and Ser269.

It belongs to the IspH family. It depends on [4Fe-4S] cluster as a cofactor.

It catalyses the reaction isopentenyl diphosphate + 2 oxidized [2Fe-2S]-[ferredoxin] + H2O = (2E)-4-hydroxy-3-methylbut-2-enyl diphosphate + 2 reduced [2Fe-2S]-[ferredoxin] + 2 H(+). It carries out the reaction dimethylallyl diphosphate + 2 oxidized [2Fe-2S]-[ferredoxin] + H2O = (2E)-4-hydroxy-3-methylbut-2-enyl diphosphate + 2 reduced [2Fe-2S]-[ferredoxin] + 2 H(+). The protein operates within isoprenoid biosynthesis; dimethylallyl diphosphate biosynthesis; dimethylallyl diphosphate from (2E)-4-hydroxy-3-methylbutenyl diphosphate: step 1/1. It functions in the pathway isoprenoid biosynthesis; isopentenyl diphosphate biosynthesis via DXP pathway; isopentenyl diphosphate from 1-deoxy-D-xylulose 5-phosphate: step 6/6. Catalyzes the conversion of 1-hydroxy-2-methyl-2-(E)-butenyl 4-diphosphate (HMBPP) into a mixture of isopentenyl diphosphate (IPP) and dimethylallyl diphosphate (DMAPP). Acts in the terminal step of the DOXP/MEP pathway for isoprenoid precursor biosynthesis. The polypeptide is 4-hydroxy-3-methylbut-2-enyl diphosphate reductase (Colwellia psychrerythraea (strain 34H / ATCC BAA-681) (Vibrio psychroerythus)).